The following is an 817-amino-acid chain: MANSNTYLTTPTKTPSSRRNQQSQSKMQSHSKDPINAESRSRFEAYNRLQAAAVAFGEKLPIPEIVAIGGQSDGKSSLLEALLGFRFNVREVEMGTRRPLILQMVHDLSALEPRCRFQDEDSEEYGSPIVSATAVADVIRSRTEALLKKTKTAVSPKPIVMRAEYAHCPNLTIIDTPGFVLKAKKGEPETTPDEILSMVKSLASPPHRILLFLQQSSVEWCSSLWLDAVREIDSSFRRTIVVVSKFDNRLKEFSDRGEVDRYLSASGYLGENTRPYFVALPKDRSTISNDEFRRQISQVDTEVIRHLREGVKGGFDEEKFRSCIGFGSLRDFLESELQKRYKEAAPATLALLEERCSEVTDDMLRMDMKIQATSDVAHLRKAAMLYTASISNHVGALIDGAANPAPEQWGKTTEEERGESGIGSWPGVSVDIKPPNAVLKLYGGAAFERVIHEFRCAAYSIECPPVSREKVANILLAHAGRGGGRGVTEASAEIARTAARSWLAPLLDTACDRLAFVLGSLFEIALERNLNQNSEYEKKTENMDGYVGFHAAVRNCYSRFVKNLAKQCKQLVRHHLDSVTSPYSMACYENNYHQGGAFGAYNKFNQASPNSFCFELSDTSRDEPMKDQENIPPEKNNGQETTPGKGGESHITVPETPSPDQPCEIVYGLVKKEIGNGPDGVGARKRMARMVGNRNIEPFRVQNGGLMFANADNGMKSSSAYSEICSSAAQHFARIREVLVERSVTSTLNSGFLTPCRDRLVVALGLDLFAVNDDKFMDMFVAPGAIVVLQNERQQLQKRQKILQSCLTEFKTVARSL.

Residues 1–20 (MANSNTYLTTPTKTPSSRRN) are compositionally biased toward polar residues. Positions 1-37 (MANSNTYLTTPTKTPSSRRNQQSQSKMQSHSKDPINA) are disordered. In terms of domain architecture, Dynamin-type G spans 59-346 (KLPIPEIVAI…LQKRYKEAAP (288 aa)). Residues 69-76 (GGQSDGKS) are G1 motif. GTP is bound at residue 69–76 (GGQSDGKS). The segment at 95–97 (GTR) is G2 motif. Residues 175–178 (DTPG) form a G3 motif region. Residues 175 to 179 (DTPGF) and 244 to 247 (SKFD) each bind GTP. The interval 244 to 247 (SKFD) is G4 motif. Residues 280-283 (LPKD) form a G5 motif region. Disordered regions lie at residues 405 to 425 (APEQ…IGSW) and 616 to 658 (LSDT…ETPS). Over residues 618–629 (DTSRDEPMKDQE) the composition is skewed to basic and acidic residues.

The protein belongs to the TRAFAC class dynamin-like GTPase superfamily. Dynamin/Fzo/YdjA family. In terms of tissue distribution, expressed in root and leaf meristems.

It is found in the cytoplasm. The protein localises to the cytoskeleton. It localises to the phragmoplast. Probable microtubule-associated force-producing protein that is targeted to the forming cell plate during cytokinesis. May play a role in cell division. The polypeptide is Dynamin-related protein 5A (DRP5A) (Arabidopsis thaliana (Mouse-ear cress)).